Consider the following 449-residue polypeptide: Adenylosuccinate synthetase (449 aa).

Residues 12–18 (GDEGKGK) and 40–42 (GHT) contribute to the GTP site. Catalysis depends on aspartate 13, which acts as the Proton acceptor. Aspartate 13 and glycine 40 together coordinate Mg(2+). Residues 13-16 (DEGK), 38-41 (NAGH), threonine 128, arginine 142, glutamine 223, threonine 238, and arginine 302 each bind IMP. The Proton donor role is filled by histidine 41. Residue 298 to 304 (TTTGRQR) coordinates substrate. Residues arginine 304, 330 to 332 (KLD), and 412 to 414 (SLG) each bind GTP.

This sequence belongs to the adenylosuccinate synthetase family. As to quaternary structure, homodimer. The cofactor is Mg(2+).

It localises to the cytoplasm. It carries out the reaction IMP + L-aspartate + GTP = N(6)-(1,2-dicarboxyethyl)-AMP + GDP + phosphate + 2 H(+). The protein operates within purine metabolism; AMP biosynthesis via de novo pathway; AMP from IMP: step 1/2. In terms of biological role, plays an important role in the de novo pathway of purine nucleotide biosynthesis. Catalyzes the first committed step in the biosynthesis of AMP from IMP. The protein is Adenylosuccinate synthetase of Synechococcus sp. (strain JA-2-3B'a(2-13)) (Cyanobacteria bacterium Yellowstone B-Prime).